The primary structure comprises 322 residues: HPr kinase/phosphorylase (322 aa).

Catalysis depends on residues histidine 146 and lysine 167. 161–168 (GDSGLGKS) serves as a coordination point for ATP. Serine 168 lines the Mg(2+) pocket. Aspartate 185 (proton acceptor; for phosphorylation activity. Proton donor; for dephosphorylation activity) is an active-site residue. Residues 209-218 (LEVRGLGLLD) are important for the catalytic mechanism of both phosphorylation and dephosphorylation. Position 210 (glutamate 210) interacts with Mg(2+). The active site involves arginine 250. Positions 271 to 276 (QVAAGR) are important for the catalytic mechanism of dephosphorylation.

This sequence belongs to the HPrK/P family. Homohexamer. The cofactor is Mg(2+).

The enzyme catalyses [HPr protein]-L-serine + ATP = [HPr protein]-O-phospho-L-serine + ADP + H(+). It carries out the reaction [HPr protein]-O-phospho-L-serine + phosphate + H(+) = [HPr protein]-L-serine + diphosphate. Functionally, catalyzes the ATP- as well as the pyrophosphate-dependent phosphorylation of a specific serine residue in HPr, a phosphocarrier protein of the phosphoenolpyruvate-dependent sugar phosphotransferase system (PTS). HprK/P also catalyzes the pyrophosphate-producing, inorganic phosphate-dependent dephosphorylation (phosphorolysis) of seryl-phosphorylated HPr (P-Ser-HPr). The chain is HPr kinase/phosphorylase from Burkholderia multivorans (strain ATCC 17616 / 249).